A 289-amino-acid chain; its full sequence is 4-hydroxy-tetrahydrodipicolinate synthase (289 aa).

Position 44 (Thr-44) interacts with pyruvate. Catalysis depends on Tyr-132, which acts as the Proton donor/acceptor. Residue Lys-161 is the Schiff-base intermediate with substrate of the active site. Ile-201 is a binding site for pyruvate.

The protein belongs to the DapA family. In terms of assembly, homotetramer; dimer of dimers.

It localises to the cytoplasm. It catalyses the reaction L-aspartate 4-semialdehyde + pyruvate = (2S,4S)-4-hydroxy-2,3,4,5-tetrahydrodipicolinate + H2O + H(+). The protein operates within amino-acid biosynthesis; L-lysine biosynthesis via DAP pathway; (S)-tetrahydrodipicolinate from L-aspartate: step 3/4. In terms of biological role, catalyzes the condensation of (S)-aspartate-beta-semialdehyde [(S)-ASA] and pyruvate to 4-hydroxy-tetrahydrodipicolinate (HTPA). The chain is 4-hydroxy-tetrahydrodipicolinate synthase from Methanocaldococcus jannaschii (strain ATCC 43067 / DSM 2661 / JAL-1 / JCM 10045 / NBRC 100440) (Methanococcus jannaschii).